Reading from the N-terminus, the 291-residue chain is Porphobilinogen deaminase (291 aa).

Cys-237 bears the S-(dipyrrolylmethanemethyl)cysteine mark.

This sequence belongs to the HMBS family. As to quaternary structure, monomer. Dipyrromethane serves as cofactor.

The catalysed reaction is 4 porphobilinogen + H2O = hydroxymethylbilane + 4 NH4(+). Its pathway is porphyrin-containing compound metabolism; protoporphyrin-IX biosynthesis; coproporphyrinogen-III from 5-aminolevulinate: step 2/4. In terms of biological role, tetrapolymerization of the monopyrrole PBG into the hydroxymethylbilane pre-uroporphyrinogen in several discrete steps. In Clostridium perfringens (strain SM101 / Type A), this protein is Porphobilinogen deaminase.